We begin with the raw amino-acid sequence, 431 residues long: Levansucrase LscB (431 aa).

5 residues coordinate sucrose: Trp61, Asp62, Ala148, Arg218, and Asp219. Residue Asp62 is the Nucleophile of the active site. Glu303 functions as the Proton donor/acceptor in the catalytic mechanism.

It belongs to the glycosyl hydrolase 68 family.

It localises to the secreted. It catalyses the reaction [6)-beta-D-fructofuranosyl-(2-&gt;](n) alpha-D-glucopyranoside + sucrose = [6)-beta-D-fructofuranosyl-(2-&gt;](n+1) alpha-D-glucopyranoside + D-glucose. In terms of biological role, catalyzes the synthesis of levan, a fructose polymer, by transferring the fructosyl moiety from sucrose to a growing acceptor molecule. This chain is Levansucrase LscB, found in Pseudomonas savastanoi pv. glycinea (Pseudomonas syringae pv. glycinea).